Consider the following 338-residue polypeptide: MLISQRPTLTEEFIDSSRSKFIIEPLEPGFGYTLGNSLRRTLLSSIPGAAVTSVKIDGVLHEFTTINGIKEDVSDIILNIKGLVLSSDSDEPVIMHLSKEGPGVVTAGDIEPPADVEIHNPDLHIATLNENAKLDIELIVERGRGYVPATMTATGGDIGRIPVDQIYSPVLKVSYKVEATRVEQRTDFDKLIIDVETKNSISARDALASAGKTLVELFGLARELNVAAEGIEIGPSPQETEYIAAYSMPIEDLDFSVRSYNCLKREDIHTVGELAERAESDLLDIRNFGQKSINEVKIKLAGLGLTLKDAPEDFDPSTLEGYDAETGGYIDVEPEDAE.

Residues 1-225 are alpha N-terminal domain (alpha-NTD); sequence MLISQRPTLT…ELFGLARELN (225 aa). The segment at 242 to 338 is alpha C-terminal domain (alpha-CTD); it reads YIAAYSMPIE…YIDVEPEDAE (97 aa). The interval 314 to 338 is disordered; the sequence is FDPSTLEGYDAETGGYIDVEPEDAE.

Belongs to the RNA polymerase alpha chain family. In terms of assembly, homodimer. The RNAP catalytic core consists of 2 alpha, 1 beta, 1 beta' and 1 omega subunit. When a sigma factor is associated with the core the holoenzyme is formed, which can initiate transcription.

The enzyme catalyses RNA(n) + a ribonucleoside 5'-triphosphate = RNA(n+1) + diphosphate. Its function is as follows. DNA-dependent RNA polymerase catalyzes the transcription of DNA into RNA using the four ribonucleoside triphosphates as substrates. The chain is DNA-directed RNA polymerase subunit alpha from Corynebacterium efficiens (strain DSM 44549 / YS-314 / AJ 12310 / JCM 11189 / NBRC 100395).